The following is a 482-amino-acid chain: Glycogen synthase (482 aa).

Residue Lys-15 participates in ADP-alpha-D-glucose binding.

Belongs to the glycosyltransferase 1 family. Bacterial/plant glycogen synthase subfamily.

It carries out the reaction [(1-&gt;4)-alpha-D-glucosyl](n) + ADP-alpha-D-glucose = [(1-&gt;4)-alpha-D-glucosyl](n+1) + ADP + H(+). Its pathway is glycan biosynthesis; glycogen biosynthesis. Its function is as follows. Synthesizes alpha-1,4-glucan chains using ADP-glucose. The polypeptide is Glycogen synthase (Elusimicrobium minutum (strain Pei191)).